The sequence spans 716 residues: Amino-acid acetyltransferase, mitochondrial (716 aa).

The N-terminal 44 residues, 1-44, are a transit peptide targeting the mitochondrion; that stretch reads MSLHTGWPRTVNSSFLKKHRSSLCTCQHTSSVLPRSFSTTPDRH. Over residues 37-56 the composition is skewed to polar residues; that stretch reads FSTTPDRHVQQSADFSSTSR. Disordered regions lie at residues 37–58 and 96–121; these read FSTT…SRSY and KAQH…TLPS. The segment covering 101 to 112 has biased composition (basic and acidic residues); the sequence is KSPDANKPEPEK. Residues 537–706 form the N-acetyltransferase domain; it reads SRPRLKLDDP…YEAVCRSIQP (170 aa).

It belongs to the acetyltransferase family.

It localises to the mitochondrion. It catalyses the reaction L-glutamate + acetyl-CoA = N-acetyl-L-glutamate + CoA + H(+). Its pathway is amino-acid biosynthesis; L-arginine biosynthesis; N(2)-acetyl-L-ornithine from L-glutamate: step 1/4. Its function is as follows. N-acetylglutamate synthase involved in arginine biosynthesis. This chain is Amino-acid acetyltransferase, mitochondrial (arg2), found in Aspergillus fumigatus (strain CBS 144.89 / FGSC A1163 / CEA10) (Neosartorya fumigata).